Reading from the N-terminus, the 127-residue chain is Large ribosomal subunit protein bL17 (127 aa).

This sequence belongs to the bacterial ribosomal protein bL17 family. Part of the 50S ribosomal subunit. Contacts protein L32.

The protein is Large ribosomal subunit protein bL17 of Lactobacillus johnsonii (strain CNCM I-12250 / La1 / NCC 533).